Reading from the N-terminus, the 343-residue chain is Putative trace amine-associated receptor 3 (343 aa).

At 1-35 (MDLTYIPEDLSSCPKFVNKILSSHQPLFSCPGDNV) the chain is on the extracellular side. A helical membrane pass occupies residues 36–56 (FGYDWSHDYPLFGNLVIMVSI). Residues 57–68 (SHFKQLHSPTNF) are Cytoplasmic-facing. Residues 69–89 (LILSMATTDFLLGFVIMPYSI) traverse the membrane as a helical segment. Over 90–150 (MRSVESCWYF…TKMTNSTIKQ (61 aa)) the chain is Extracellular. Residues Cys-104 and Cys-189 are joined by a disulfide bond. A glycan (N-linked (GlcNAc...) asparagine) is linked at Asn-145. A helical transmembrane segment spans residues 151–168 (LLAFCWSVPALFSFGLVL). Residues 169–172 (SEAD) lie on the Cytoplasmic side of the membrane. An extracellular Loop 2 (ECL2) region spans residues 173–186 (VSGMQSYKILVACF). A helical transmembrane segment spans residues 173 to 193 (VSGMQSYKILVACFNFCALTF). Residues 194–198 (NKFWG) lie on the Extracellular side of the membrane. Residues 199–223 (TILFTTCFFTPGSIMVGIYGKIFIV) traverse the membrane as a helical segment. Over 224–257 (SKQHARVISHVPENTKGAVKKHLSKKKDRKAAKT) the chain is Cytoplasmic. A helical membrane pass occupies residues 258–278 (LGIVMGVFLACWLPCFLAVLI). Residues 279-287 (DPYLDYSTP) lie on the Extracellular side of the membrane. The helical transmembrane segment at 288-308 (ILILDLLVWLRYFNSTCNPLI) threads the bilayer. The Cytoplasmic segment spans residues 309-343 (HGFFNPWFQKAFKYIVSGKIFSSHSETANLFPEAH).

Belongs to the G-protein coupled receptor 1 family. Not expressed in the pons, thalamus, globus pallidus, caudate, putamen or cerebellum.

Its subcellular location is the cell membrane. Putative olfactory receptor activated by several primary trace amines. The sequence is that of Putative trace amine-associated receptor 3 from Homo sapiens (Human).